A 334-amino-acid chain; its full sequence is 4-hydroxyproline 2-epimerase (334 aa).

C91 acts as the Proton acceptor in catalysis. Substrate contacts are provided by residues 92 to 93, H224, and D250; that span reads GH. The Proton donor role is filled by C254. 255–256 serves as a coordination point for substrate; it reads GT.

This sequence belongs to the proline racemase family.

The catalysed reaction is trans-4-hydroxy-L-proline = cis-4-hydroxy-D-proline. In terms of biological role, catalyzes the epimerization of trans-4-hydroxy-L-proline (t4LHyp) to cis-4-hydroxy-D-proline (c4DHyp). Is likely involved in a degradation pathway that converts t4LHyp to alpha-ketoglutarate. Displays no proline racemase activity. The sequence is that of 4-hydroxyproline 2-epimerase from Spirosoma linguale (strain ATCC 33905 / DSM 74 / LMG 10896 / Claus 1).